A 529-amino-acid polypeptide reads, in one-letter code: Inosine-5'-monophosphate dehydrogenase (529 aa).

2 CBS domains span residues Met-129–Val-185 and Met-189–Thr-246. Residues Asp-283 and Gly-334–Gly-336 contribute to the NAD(+) site. K(+)-binding residues include Gly-336 and Gly-338. An IMP-binding site is contributed by Ser-339. Position 341 (Cys-341) interacts with K(+). Cys-341 functions as the Thioimidate intermediate in the catalytic mechanism. Residues Asp-374–Gly-376, Gly-397–Ser-398, and Tyr-421–Gly-425 each bind IMP. Arg-443 (proton acceptor) is an active-site residue. Position 458 (Glu-458) interacts with IMP. Residues Glu-511, Ser-512, and His-513 each contribute to the K(+) site.

This sequence belongs to the IMPDH/GMPR family. In terms of assembly, homotetramer. The cofactor is K(+).

The catalysed reaction is IMP + NAD(+) + H2O = XMP + NADH + H(+). Its pathway is purine metabolism; XMP biosynthesis via de novo pathway; XMP from IMP: step 1/1. Its activity is regulated as follows. Mycophenolic acid (MPA) is a non-competitive inhibitor that prevents formation of the closed enzyme conformation by binding to the same site as the amobile flap. In contrast, mizoribine monophosphate (MZP) is a competitive inhibitor that induces the closed conformation. MPA is a potent inhibitor of mammalian IMPDHs but a poor inhibitor of the bacterial enzymes. MZP is a more potent inhibitor of bacterial IMPDH. In terms of biological role, catalyzes the conversion of inosine 5'-phosphate (IMP) to xanthosine 5'-phosphate (XMP), the first committed and rate-limiting step in the de novo synthesis of guanine nucleotides, and therefore plays an important role in the regulation of cell growth. The sequence is that of Inosine-5'-monophosphate dehydrogenase from Mycobacterium leprae (strain TN).